Consider the following 492-residue polypeptide: G2/mitotic-specific cyclin CLB2 (492 aa).

The segment at 1–176 (MPQVTKTNNE…QPEVGERSQS (176 aa)) is disordered. Residues 23–33 (QESISTIKNTT) are compositionally biased toward polar residues. Residues 34-58 (ISNSQHKQQTQQQISSPPQVSVTSS) are compositionally biased toward low complexity. The segment covering 59 to 83 (EGVSHVNTRQYLGDVSNQYITNAKP) has biased composition (polar residues). The span at 111–135 (ASDNNNNGSTSSSSNSSNNNNNDAN) shows a compositional bias: low complexity. In terms of domain architecture, Cyclin N-terminal spans 208 to 334 (EIFSYYYELE…MLTILNFDLN (127 aa)).

This sequence belongs to the cyclin family. Cyclin AB subfamily.

Its function is as follows. 2/mitotic-specific cyclin essential for the control of the cell cycle at the G2/M (mitosis) transition. G2/M cyclins accumulate steadily during G2 and are abruptly destroyed at mitosis. Degradation is necessary for the cell to exit from mitosis. Plays a role in morphogenesis by negatively regulating polarized growth. Through binding to CDC28 regulates cytokinesis, partly by phosphorylation of the actomyosin ring component IQG1. Also involved in the phosphorylation of CDC6 and CDC54. This Candida albicans (strain SC5314 / ATCC MYA-2876) (Yeast) protein is G2/mitotic-specific cyclin CLB2 (CLB2).